The following is a 140-amino-acid chain: Thioredoxin H9 (140 aa).

G2 is lipidated: N-myristoyl glycine. C4 is lipidated: S-palmitoyl cysteine. Position 14 is a phosphoserine (S14). One can recognise a Thioredoxin domain in the interval 25–129 (VHLITTKESW…PELQKKVTSI (105 aa)). Catalysis depends on nucleophile residues C57 and C60. C57 and C60 are joined by a disulfide. Phosphoserine is present on S136.

This sequence belongs to the thioredoxin family. Plant H-type subfamily. In terms of tissue distribution, ubiquitous.

It is found in the cell membrane. Probable thiol-disulfide oxidoreductase that may play a role in intercellular communication due to its ability to move from cell to cell. This chain is Thioredoxin H9 (TRX9), found in Arabidopsis thaliana (Mouse-ear cress).